The primary structure comprises 205 residues: MSTQYIDETAFVQAEQGKTNLMFSDEKQQARFELGVSMVIYKWDALDVAVENSWGGPDSAEKRDWITGIVVDLFKNEKVVDAALIEETLLYAMIDEFETNVEDDSALPIAVEVINIYNDCFNLNYNKVEKLYLEWQEKQRTKKSKRVVHIEGDDDEDDEDVEDYDDEDEDEEMDEVVPDLVSSKPEPIVDEDGFELVQPKGRRKH.

Positions 144–205 are disordered; it reads SKRVVHIEGD…LVQPKGRRKH (62 aa). The span at 152 to 177 shows a compositional bias: acidic residues; the sequence is GDDDEDDEDVEDYDDEDEDEEMDEVV.

The protein belongs to the TSR2 family. Interacts with RPS26A.

The protein localises to the cytoplasm. Its subcellular location is the nucleus. Required for 20S pre-rRNA processing. This is Pre-rRNA-processing protein TSR2 from Saccharomyces cerevisiae (strain ATCC 204508 / S288c) (Baker's yeast).